Consider the following 104-residue polypeptide: Probable monothiol glutaredoxin 2 (104 aa).

The Glutaredoxin domain maps to 7–104; that stretch reads FEFIENEIKN…NGELEKMLKG (98 aa). K24 is a glutathione binding site. C32 serves as a coordination point for [2Fe-2S] cluster. Residues R61, F73, and 86-87 contribute to the glutathione site; that span reads CD.

It belongs to the glutaredoxin family. Monothiol subfamily.

In Rickettsia felis (strain ATCC VR-1525 / URRWXCal2) (Rickettsia azadi), this protein is Probable monothiol glutaredoxin 2 (grxC2).